The sequence spans 255 residues: ATP synthase subunit a (255 aa).

6 helical membrane-spanning segments follow: residues 28–48 (VDSL…FWLG), 86–106 (IAPL…MDLV), 125–145 (ILPT…FFLI), 164–184 (FHPF…IELI), 203–223 (LIFI…GTPW), and 224–244 (AIFH…LTVV).

This sequence belongs to the ATPase A chain family. As to quaternary structure, F-type ATPases have 2 components, CF(1) - the catalytic core - and CF(0) - the membrane proton channel. CF(1) has five subunits: alpha(3), beta(3), gamma(1), delta(1), epsilon(1). CF(0) has three main subunits: a(1), b(2) and c(9-12). The alpha and beta chains form an alternating ring which encloses part of the gamma chain. CF(1) is attached to CF(0) by a central stalk formed by the gamma and epsilon chains, while a peripheral stalk is formed by the delta and b chains.

Its subcellular location is the cell inner membrane. In terms of biological role, key component of the proton channel; it plays a direct role in the translocation of protons across the membrane. This is ATP synthase subunit a from Alkalilimnicola ehrlichii (strain ATCC BAA-1101 / DSM 17681 / MLHE-1).